Here is a 563-residue protein sequence, read N- to C-terminus: Membrane protein insertase YidC (563 aa).

The helical transmembrane segment at 1 to 21 (MDIKRTILIVALAIVTYVGVL) threads the bilayer. Residues 43-62 (APGIPDTAAGTNGSASADVP) form a disordered region. 5 helical membrane passes run 344–364 (LELT…FWLL), 370–390 (ILGN…GLFF), 440–460 (LGGC…YWVL), 471–491 (WILW…PIIM), and 518–538 (PIIF…YWVV).

Belongs to the OXA1/ALB3/YidC family. Type 1 subfamily. In terms of assembly, interacts with the Sec translocase complex via SecD. Specifically interacts with transmembrane segments of nascent integral membrane proteins during membrane integration.

Its subcellular location is the cell inner membrane. Functionally, required for the insertion and/or proper folding and/or complex formation of integral membrane proteins into the membrane. Involved in integration of membrane proteins that insert both dependently and independently of the Sec translocase complex, as well as at least some lipoproteins. Aids folding of multispanning membrane proteins. This is Membrane protein insertase YidC from Pseudomonas syringae pv. syringae (strain B728a).